The primary structure comprises 397 residues: LIM/homeobox protein Lhx9 (397 aa).

The segment at 40–60 is disordered; the sequence is RSKTESRLAKGGQMNGRETNM. LIM zinc-binding domains follow at residues 69-130 and 131-193; these read ALCA…RFSV and QRCA…LLQG. The segment at residues 267–326 is a DNA-binding region (homeobox); that stretch reads TKRMATSFKHHQLRTMKSYFAINHNPDAKDLKQLAQKTGLTKRVLQVWFQNARAKFRRNL. Disordered stretches follow at residues 330–363 and 378–397; these read ENGG…TTLT and SNLD…TNLF. Low complexity predominate over residues 353-363; the sequence is LTPPGTATTLT. Residues 387 to 397 show a composition bias toward polar residues; sequence SPSQTTLTNLF.

Its subcellular location is the nucleus. In terms of biological role, may be involved in gonadal development. In Gallus gallus (Chicken), this protein is LIM/homeobox protein Lhx9 (LHX9).